Reading from the N-terminus, the 80-residue chain is MEGLIEAIKSNDLVAARKLFAEAMAARTIDLIKEEKIAIARNFLIEGEEPEDEDEDEDDEDSDDKDDKKDEDSDEDEDDE.

Positions 43 to 80 (FLIEGEEPEDEDEDEDDEDSDDKDDKKDEDSDEDEDDE) are disordered. A compositionally biased stretch (acidic residues) spans 46–64 (EGEEPEDEDEDEDDEDSDD).

Its function is as follows. The production of one phage particle requires 250 copies of PIP. During head maturation, PIP is cleaved to form the stable head constituent, internal peptide II. The chain is Prehead core component PIP (67) from Escherichia coli (Bacteriophage T4).